Reading from the N-terminus, the 381-residue chain is Spermidine/putrescine import ATP-binding protein PotA (381 aa).

The ABC transporter domain occupies 22–252; it reads VELRNVFKFF…PKTSFVADFI (231 aa). Residue 54 to 61 coordinates ATP; it reads GPSGCGKT.

Belongs to the ABC transporter superfamily. Spermidine/putrescine importer (TC 3.A.1.11.1) family. As to quaternary structure, the complex is composed of two ATP-binding proteins (PotA), two transmembrane proteins (PotB and PotC) and a solute-binding protein (PotD).

The protein localises to the cell inner membrane. The enzyme catalyses ATP + H2O + polyamine-[polyamine-binding protein]Side 1 = ADP + phosphate + polyamineSide 2 + [polyamine-binding protein]Side 1.. Functionally, part of the ABC transporter complex PotABCD involved in spermidine/putrescine import. Responsible for energy coupling to the transport system. This is Spermidine/putrescine import ATP-binding protein PotA from Trichormus variabilis (strain ATCC 29413 / PCC 7937) (Anabaena variabilis).